The sequence spans 117 residues: Small ribosomal subunit protein eS25 (117 aa).

Positions 1-34 (MPPKKDPKGGKAPPSKKKEGSGGGKAKKKKWSKG) are disordered. Basic residues predominate over residues 25-34 (KAKKKKWSKG).

This sequence belongs to the eukaryotic ribosomal protein eS25 family.

The polypeptide is Small ribosomal subunit protein eS25 (rps-25) (Caenorhabditis elegans).